The primary structure comprises 280 residues: S-methyl-5'-thioadenosine phosphorylase (280 aa).

Residues Ser15, 57–58 (RH), and 90–91 (TA) contribute to the phosphate site. Met193 provides a ligand contact to substrate. Position 194 (Thr194) interacts with phosphate. 217-219 (DYD) is a binding site for substrate.

Belongs to the PNP/MTAP phosphorylase family. MTAP subfamily. In terms of assembly, homotrimer.

The protein localises to the cytoplasm. It is found in the nucleus. It carries out the reaction S-methyl-5'-thioadenosine + phosphate = 5-(methylsulfanyl)-alpha-D-ribose 1-phosphate + adenine. The protein operates within amino-acid biosynthesis; L-methionine biosynthesis via salvage pathway; S-methyl-5-thio-alpha-D-ribose 1-phosphate from S-methyl-5'-thioadenosine (phosphorylase route): step 1/1. Its function is as follows. Catalyzes the reversible phosphorylation of S-methyl-5'-thioadenosine (MTA) to adenine and 5-methylthioribose-1-phosphate. Involved in the breakdown of MTA, a major by-product of polyamine biosynthesis. Responsible for the first step in the methionine salvage pathway after MTA has been generated from S-adenosylmethionine. Has broad substrate specificity with 6-aminopurine nucleosides as preferred substrates. The sequence is that of S-methyl-5'-thioadenosine phosphorylase (mtap) from Danio rerio (Zebrafish).